A 677-amino-acid chain; its full sequence is Beta-galactosidase (677 aa).

The signal sequence occupies residues 1–23; that stretch reads MPGFLVRILPLLLALLLLGPTRG. A propeptide spanning residues 24–28 is cleaved from the precursor; it reads LRNAT. N-linked (GlcNAc...) asparagine glycosylation is present at Asn-26. Residues Tyr-83, Glu-129, and Asn-187 each coordinate substrate. Glu-188 (proton donor) is an active-site residue. A disulfide bridge links Cys-195 with Cys-230. An N-linked (GlcNAc...) asparagine glycan is attached at Asn-247. Glu-268 (nucleophile) is an active-site residue. Tyr-333 is a binding site for substrate. N-linked (GlcNAc...) asparagine glycosylation is found at Asn-464, Asn-498, Asn-545, and Asn-555. The cysteines at positions 626 and 634 are disulfide-linked. The interval 654 to 677 is disordered; it reads SKPVEKKLMPSPPQKNKDSWLDHV. The span at 668–677 shows a compositional bias: basic and acidic residues; that stretch reads KNKDSWLDHV.

The protein belongs to the glycosyl hydrolase 35 family. Homodimer. May form higher multimers.

The protein resides in the lysosome. It carries out the reaction Hydrolysis of terminal non-reducing beta-D-galactose residues in beta-D-galactosides.. In terms of biological role, cleaves beta-linked terminal galactosyl residues from gangliosides, glycoproteins, and glycosaminoglycans. The polypeptide is Beta-galactosidase (GLB1) (Pongo abelii (Sumatran orangutan)).